A 171-amino-acid chain; its full sequence is Crossover junction endodeoxyribonuclease RuvC (171 aa).

Active-site residues include Asp-7, Glu-67, and Asp-139. Mg(2+) contacts are provided by Asp-7, Glu-67, and Asp-139.

It belongs to the RuvC family. In terms of assembly, homodimer which binds Holliday junction (HJ) DNA. The HJ becomes 2-fold symmetrical on binding to RuvC with unstacked arms; it has a different conformation from HJ DNA in complex with RuvA. In the full resolvosome a probable DNA-RuvA(4)-RuvB(12)-RuvC(2) complex forms which resolves the HJ. Mg(2+) is required as a cofactor.

Its subcellular location is the cytoplasm. The catalysed reaction is Endonucleolytic cleavage at a junction such as a reciprocal single-stranded crossover between two homologous DNA duplexes (Holliday junction).. In terms of biological role, the RuvA-RuvB-RuvC complex processes Holliday junction (HJ) DNA during genetic recombination and DNA repair. Endonuclease that resolves HJ intermediates. Cleaves cruciform DNA by making single-stranded nicks across the HJ at symmetrical positions within the homologous arms, yielding a 5'-phosphate and a 3'-hydroxyl group; requires a central core of homology in the junction. The consensus cleavage sequence is 5'-(A/T)TT(C/G)-3'. Cleavage occurs on the 3'-side of the TT dinucleotide at the point of strand exchange. HJ branch migration catalyzed by RuvA-RuvB allows RuvC to scan DNA until it finds its consensus sequence, where it cleaves and resolves the cruciform DNA. This Geotalea uraniireducens (strain Rf4) (Geobacter uraniireducens) protein is Crossover junction endodeoxyribonuclease RuvC.